The primary structure comprises 499 residues: Membrane-associated tyrosine- and threonine-specific cdc2-inhibitory kinase (499 aa).

N-acetylmethionine is present on M1. Residues 1-29 (MLERPPALAMPMPTEGTPPPLSGTPIPVP) are disordered. A compositionally biased stretch (pro residues) spans 16–28 (GTPPPLSGTPIPV). At T17 the chain carries Phosphothreonine. S40 carries the post-translational modification Phosphoserine. Residues 42–72 (KRPRGLSRSLPPPPPAKGSIPISRLFPPRTP) are disordered. Phosphoserine occurs at positions 94 and 120. Residues 110 to 359 (FQRLSRLGHG…AEALLALPVL (250 aa)) form the Protein kinase domain. Residues 116–124 (LGHGSYGEV) and K139 contribute to the ATP site. Phosphoserine occurs at positions 143 and 160. Residue D233 is the Proton acceptor of the active site. N238, D251, and G253 together coordinate Mg(2+). A Membrane-association motif motif is present at residues 382–398 (LWQALLALLCWLWHGLA). Residues 398–499 (AHPASWLQPL…SLFEDTLDPT (102 aa)) are interaction with PIN1. S426 carries the phosphoserine; by PLK1 modification. Positions 437–499 (GPSLSPEAVL…SLFEDTLDPT (63 aa)) are interaction with CDC2-CCNB1. The segment at 451-485 (GSTSTPRSRCTPRDALDLSDINSEPPRGSFPSFEP) is disordered. Phosphoserine occurs at positions 469, 473, and 482. T495 bears the Phosphothreonine; by PLK1 mark.

The protein belongs to the protein kinase superfamily. Ser/Thr protein kinase family. WEE1 subfamily. In terms of assembly, interacts with CDC2-CCNB1 complex. Can also interact with PIN1 when phosphorylated by CDC2-CCNB1. In terms of processing, autophosphorylated. Phosphorylated by CDC2-CCNB1 complexes on undefined serine and threonine residues. The phosphorylation by CDC2-CCNB1 complexes may inhibit the catalytic activity.

The protein resides in the endoplasmic reticulum membrane. Its subcellular location is the golgi apparatus membrane. It carries out the reaction L-seryl-[protein] + ATP = O-phospho-L-seryl-[protein] + ADP + H(+). The catalysed reaction is L-threonyl-[protein] + ATP = O-phospho-L-threonyl-[protein] + ADP + H(+). Negatively regulated by hyperphosphorylation during mitosis. The hyperphosphorylated form does not associate with CCNB1-CDC2 complexes. The PLK1 protein kinase may be required for mitotic phosphorylation. Acts as a negative regulator of entry into mitosis (G2 to M transition) by phosphorylation of the CDK1 kinase specifically when CDK1 is complexed to cyclins. Mediates phosphorylation of CDK1 predominantly on 'Thr-14'. Also involved in Golgi fragmentation. May be involved in phosphorylation of CDK1 on 'Tyr-15' to a lesser degree, however tyrosine kinase activity is unclear and may be indirect. This is Membrane-associated tyrosine- and threonine-specific cdc2-inhibitory kinase (PKMYT1) from Homo sapiens (Human).